The primary structure comprises 371 residues: MSL complex subunit 3B (371 aa).

Disordered regions lie at residues 1-44 and 160-229; these read MATL…READ and EERA…SPQA. Positions 8 to 44 are enriched in basic and acidic residues; the sequence is PKDDGEGKDEGGSDRGDGDPKPKGKKEVEAHTRREAD. The MRG domain occupies 44 to 367; the sequence is DERAVRIPIP…CEAHYSSKNP (324 aa). Basic residues predominate over residues 206–216; that stretch reads APRRSTRHSTH.

Its subcellular location is the nucleus. Its function is as follows. Probable non-catalytic component of the MSL histone acetyltransferase complex, a multiprotein complex that mediates the majority of histone H4 acetylation at 'Lys-16' (H4K16ac), an epigenetic mark that prevents chromatin compaction. In Rattus norvegicus (Rat), this protein is MSL complex subunit 3B.